Consider the following 145-residue polypeptide: uncharacterized protein (145 aa).

This is an uncharacterized protein from Homo sapiens (Human).